Reading from the N-terminus, the 351-residue chain is MTASSRNVRFNVSDDYEILDVIGEGAYGIVCSAIHKPSGQKVAIKKISPFDHSMFCLRTLREMKLLRYFNHENIISILDIQQPQDFESFSEVYLIQELMETDMHRVIRTQDLSDDHCQYFIYQILRALKAMHSADILHRDLKPSNLLLNANCDLKVCDFGLARSAVSTEDSSSFMTEYVATRWYRAPEIMLTFKEYTKAIDIWSVGCILAEMLSGRPLFPGKDYHHQLMLILDVLGTPTMEDYYGIKSRRAREYIRSLPFKKRVSFASIFPRANPLALDLLEKLLAFNPAKRVTAEEALQHNYLEPYHDPDDEPTAPPISPSFFDFDRIKDSLTKNDLKILIYKEIMSMNN.

The Protein kinase domain maps to 16–304 (YEILDVIGEG…AEEALQHNYL (289 aa)). Residues 22–30 (IGEGAYGIV) and Lys-45 each bind ATP. Asp-140 acts as the Proton acceptor in catalysis. The residue at position 176 (Thr-176) is a Phosphothreonine. The short motif at 176-178 (TEY) is the TXY element. Position 178 is a phosphotyrosine (Tyr-178).

The protein belongs to the protein kinase superfamily. CMGC Ser/Thr protein kinase family. MAP kinase subfamily. Requires Mg(2+) as cofactor. The cofactor is Mn(2+). Dually phosphorylated on Thr-176 and Tyr-178, which activates the enzyme.

It localises to the nucleus. It carries out the reaction L-seryl-[protein] + ATP = O-phospho-L-seryl-[protein] + ADP + H(+). The enzyme catalyses L-threonyl-[protein] + ATP = O-phospho-L-threonyl-[protein] + ADP + H(+). Its activity is regulated as follows. Activated by tyrosine and threonine phosphorylation. Inhibited by the MEK inhibitor U0126 but not by the p38 inhibitor SB203580. Cobalt abolishes kinase activity, while calcium, copper and nickel have little effect on kinase activity. Its function is as follows. Serine-threonine protein kinase which may be involved in pheromone signaling. Functionally complements the MAPK pheromone signaling pathway in S.cerevisiae. The protein is Mitogen-activated protein kinase 2 of Pneumocystis carinii.